Here is a 79-residue protein sequence, read N- to C-terminus: Beta-hexatoxin-Mg1a (79 aa).

Residues 1–20 (MKAPATTLILVMSLISVLWA) form the signal peptide. Residues 21–50 (TPDLEEGDLLAELGDLIATDDEYPMKPEER) constitute a propeptide that is removed on maturation. 3 disulfides stabilise this stretch: Cys-52-Cys-66, Cys-59-Cys-71, and Cys-65-Cys-76.

It belongs to the neurotoxin 15 family. 01 (magi-5) subfamily. In terms of tissue distribution, expressed by the venom gland.

It is found in the secreted. Functionally, insect and vertebrate active toxin. Binds to site 4 of mammalian voltage-gated sodium channels and shifts the activation voltage of the mammalian Nav1.2a/SCN2A channel to more hyperpolarized voltages, whereas the insect channel, DmNav1 (para), is not affected. Competes for binding at site 3 of the insect sodium channel. Causes temporary paralysis when injected into lepidopteran larvae at 8.6 nmol/g. A low intracranial injection dose into mice causes lacrimation, closure of the eyes and sweating. A high injection dose causes extensive lacrimation and death. The sequence is that of Beta-hexatoxin-Mg1a from Macrothele gigas (Japanese funnel web spider).